Here is a 705-residue protein sequence, read N- to C-terminus: Dolichyl-diphosphooligosaccharide--protein glycosyltransferase subunit STT3A (705 aa).

Residues 1-17 (MTKFGFLRLSYEKQDTL) lie on the Cytoplasmic side of the membrane. The chain crosses the membrane as a helical span at residues 18 to 38 (LKLLILSMAAVLSFSTRLFAV). Residues 39–119 (LRFESVIHEF…IDIRNVCVFL (81 aa)) lie on the Lumenal side of the membrane. The DXD motif 1 signature appears at 47 to 49 (EFD). D49 contacts Mn(2+). The helical transmembrane segment at 120–138 (APLFSSFTTIVTYHLTKEL) threads the bilayer. At 139 to 140 (KD) the chain is on the cytoplasmic side. Residues 141 to 158 (AGAGLLAAAMIAVVPGYI) form a helical membrane-spanning segment. The Lumenal segment spans residues 159–169 (SRSVAGSYDNE). Mn(2+) contacts are provided by D167 and E169. The DXD motif 2 motif lies at 167–169 (DNE). Residues 170–189 (GIAIFCMLLTYYMWIKAVKT) traverse the membrane as a helical segment. Residues 190-191 (GS) are Cytoplasmic-facing. Residues 192 to 206 (ICWAAKCALAYFYMV) traverse the membrane as a helical segment. Residues 207–211 (SSWGG) lie on the Lumenal side of the membrane. Residues 212–228 (YVFLINLIPLHVLVLML) form a helical membrane-spanning segment. Residues 229–233 (TGRFS) lie on the Cytoplasmic side of the membrane. A helical transmembrane segment spans residues 234–259 (HRIYVAYCTVYCLGTILSMQISFVGF). Residues 260–267 (QPVLSSEH) are Lumenal-facing. The helical transmembrane segment at 268–287 (MAAFGVFGLCQIHAFVDYLR) threads the bilayer. Over 288-300 (SKLNPQQFEVLFR) the chain is Cytoplasmic. A helical transmembrane segment spans residues 301–321 (SVISLVGFVLLTVGALLMLTG). The Lumenal portion of the chain corresponds to 322–356 (KISPWTGRFYSLLDPSYAKNNIPIIASVSEHQPTT). Positions 348–351 (SVSE) match the SVSE motif motif. The helical transmembrane segment at 357–379 (WSSYYFDLQLLVFMFPVGLYYCF) threads the bilayer. Over 380–385 (SNLSDA) the chain is Cytoplasmic. A helical transmembrane segment spans residues 386-402 (RIFIIMYGVTSMYFSAV). Over 403-406 (MVRL) the chain is Lumenal. Dolichyl diphosphooligosaccharide is bound at residue R405. Residues 407-428 (MLVLAPVMCILSGIGVSQVLST) traverse the membrane as a helical segment. Residues 429–453 (YMKNLDISRPDKKSKKQQDSTYPIK) are Cytoplasmic-facing. A helical membrane pass occupies residues 454–473 (NEVASGMILVMAFFLITYTF). The Lumenal portion of the chain corresponds to 474–705 (HSTWVTSEAY…DLDNRGLSRT (232 aa)). Positions 525-527 (WWD) are interacts with target acceptor peptide in protein substrate. A WWDYG motif motif is present at residues 525 to 529 (WWDYG). Y530 is a dolichyl diphosphooligosaccharide binding site. N-linked (GlcNAc...) asparagine glycosylation is found at N537 and N544. N548 carries an N-linked (GlcNAc...) (high mannose) asparagine glycan. Residues 592–599 (DINKFLWM) carry the DK motif motif.

Belongs to the STT3 family. In terms of assembly, component of the oligosaccharyltransferase (OST) complex. There are 2 OST complexes, OST-A and OST-B, which contain STT3A or STT3B as catalytic subunit, respectively. OST-A and OST-B contain common core subunits RPN1, RPN2, OST48, OST4, DAD1 and TMEM258, and OST-A contains DC2/OSTC and KRTCAP2/KCP2 specific accessory subunits. OST-A complex assembly occurs through the formation of 3 subcomplexes. Subcomplex 1 contains RPN1 and TMEM258, subcomplex 2 contains the OST-A-specific subunits STT3A, DC2/OSTC, and KCP2 as well as the core subunit OST4, and subcomplex 3 contains RPN2, DAD1, and OST48. The OST-A complex can form stable complexes with the Sec61 complex or with both the Sec61 and TRAP complexes. It depends on Mg(2+) as a cofactor. Mn(2+) is required as a cofactor. As to expression, expressed at high levels in placenta, liver, muscle and pancreas, and at very low levels in brain, lung and kidney. Expressed in skin fibroblasts (at protein level).

The protein resides in the endoplasmic reticulum. The protein localises to the endoplasmic reticulum membrane. It carries out the reaction a di-trans,poly-cis-dolichyl diphosphooligosaccharide + L-asparaginyl-[protein] = N(4)-(oligosaccharide-(1-&gt;4)-N-acetyl-beta-D-glucosaminyl-(1-&gt;4)-N-acetyl-beta-D-glucosaminyl)-L-asparaginyl-[protein] + a di-trans,poly-cis-dolichyl diphosphate + H(+). It participates in protein modification; protein glycosylation. STT3A, but not STT3B, is specifically inhibited by the N-glycosylation inhibitor NGI-235, which prevents productive binding pose of the glycan donor in the active site of STT3A. Its function is as follows. Catalytic subunit of the oligosaccharyl transferase (OST) complex that catalyzes the initial transfer of a defined glycan (Glc(3)Man(9)GlcNAc(2) in eukaryotes) from the lipid carrier dolichol-pyrophosphate to an asparagine residue within an Asn-X-Ser/Thr consensus motif in nascent polypeptide chains, the first step in protein N-glycosylation. N-glycosylation occurs cotranslationally and the complex associates with the Sec61 complex at the channel-forming translocon complex that mediates protein translocation across the endoplasmic reticulum (ER). All subunits are required for a maximal enzyme activity. This subunit contains the active site and the acceptor peptide and donor lipid-linked oligosaccharide (LLO) binding pockets. STT3A is present in the majority of OST complexes and mediates cotranslational N-glycosylation of most sites on target proteins, while STT3B-containing complexes are required for efficient post-translational glycosylation and mediate glycosylation of sites that have been skipped by STT3A. STT3A-containing OST-A complex is also required to prevent hyperglycosylation of some target proteins by preventing glycosylation of facultative sites before folding of target proteins is completed. The sequence is that of Dolichyl-diphosphooligosaccharide--protein glycosyltransferase subunit STT3A from Homo sapiens (Human).